Reading from the N-terminus, the 143-residue chain is Lysozyme C (143 aa).

Positions methionine 1 to alanine 15 are cleaved as a signal peptide. Residues lysine 16–valine 143 enclose the C-type lysozyme domain. 4 cysteine pairs are disulfide-bonded: cysteine 21–cysteine 141, cysteine 45–cysteine 129, cysteine 79–cysteine 94, and cysteine 90–cysteine 108. Active-site residues include glutamate 50 and aspartate 67.

This sequence belongs to the glycosyl hydrolase 22 family. In terms of assembly, monomer.

It is found in the secreted. It catalyses the reaction Hydrolysis of (1-&gt;4)-beta-linkages between N-acetylmuramic acid and N-acetyl-D-glucosamine residues in a peptidoglycan and between N-acetyl-D-glucosamine residues in chitodextrins.. Lysozymes have primarily a bacteriolytic function; those in tissues and body fluids are associated with the monocyte-macrophage system and enhance the activity of immunoagents. The chain is Lysozyme C (lys) from Scophthalmus maximus (Turbot).